Reading from the N-terminus, the 1343-residue chain is DNA-directed RNA polymerase subunit beta (1343 aa).

The protein belongs to the RNA polymerase beta chain family. The RNAP catalytic core consists of 2 alpha, 1 beta, 1 beta' and 1 omega subunit. When a sigma factor is associated with the core the holoenzyme is formed, which can initiate transcription.

The enzyme catalyses RNA(n) + a ribonucleoside 5'-triphosphate = RNA(n+1) + diphosphate. Its function is as follows. DNA-dependent RNA polymerase catalyzes the transcription of DNA into RNA using the four ribonucleoside triphosphates as substrates. This is DNA-directed RNA polymerase subunit beta from Haemophilus influenzae (strain PittGG).